The chain runs to 195 residues: PRELI domain containing protein 3B (195 aa).

The region spanning 1-172 is the PRELI/MSF1 domain; the sequence is MKIWTSEHVF…VIHKLNAEIE (172 aa). A phosphoserine mark is found at Ser-46 and Ser-51.

Belongs to the slowmo family.

This Rattus norvegicus (Rat) protein is PRELI domain containing protein 3B (Prelid3b).